Here is an 88-residue protein sequence, read N- to C-terminus: Thioredoxin-2 (88 aa).

The 87-residue stretch at Ser-2–Phe-88 folds into the Thioredoxin domain. Active-site nucleophile residues include Cys-31 and Cys-34. The cysteines at positions 31 and 34 are disulfide-linked.

It belongs to the thioredoxin family.

In terms of biological role, participates in various redox reactions through the reversible oxidation of its active center dithiol to a disulfide and catalyzes dithiol-disulfide exchange reactions. The sequence is that of Thioredoxin-2 (trxB) from Dictyostelium discoideum (Social amoeba).